Reading from the N-terminus, the 251-residue chain is B3 domain-containing protein REM7 (251 aa).

DNA-binding regions (TF-B3) lie at residues 11–103 and 170–251; these read NSHF…LGPS and CFVA…SRLN.

The protein localises to the nucleus. The sequence is that of B3 domain-containing protein REM7 (REM7) from Arabidopsis thaliana (Mouse-ear cress).